Here is a 189-residue protein sequence, read N- to C-terminus: Elongation factor P (189 aa).

This sequence belongs to the elongation factor P family.

The protein resides in the cytoplasm. It participates in protein biosynthesis; polypeptide chain elongation. Its function is as follows. Involved in peptide bond synthesis. Stimulates efficient translation and peptide-bond synthesis on native or reconstituted 70S ribosomes in vitro. Probably functions indirectly by altering the affinity of the ribosome for aminoacyl-tRNA, thus increasing their reactivity as acceptors for peptidyl transferase. The sequence is that of Elongation factor P from Xanthobacter autotrophicus (strain ATCC BAA-1158 / Py2).